Here is a 251-residue protein sequence, read N- to C-terminus: Ubiquinone/menaquinone biosynthesis C-methyltransferase UbiE (251 aa).

S-adenosyl-L-methionine-binding positions include Thr-74, Asp-95, 123 to 124 (NA), and Ser-140.

It belongs to the class I-like SAM-binding methyltransferase superfamily. MenG/UbiE family.

It carries out the reaction a 2-demethylmenaquinol + S-adenosyl-L-methionine = a menaquinol + S-adenosyl-L-homocysteine + H(+). The enzyme catalyses a 2-methoxy-6-(all-trans-polyprenyl)benzene-1,4-diol + S-adenosyl-L-methionine = a 5-methoxy-2-methyl-3-(all-trans-polyprenyl)benzene-1,4-diol + S-adenosyl-L-homocysteine + H(+). Its pathway is quinol/quinone metabolism; menaquinone biosynthesis; menaquinol from 1,4-dihydroxy-2-naphthoate: step 2/2. The protein operates within cofactor biosynthesis; ubiquinone biosynthesis. Functionally, methyltransferase required for the conversion of demethylmenaquinol (DMKH2) to menaquinol (MKH2) and the conversion of 2-polyprenyl-6-methoxy-1,4-benzoquinol (DDMQH2) to 2-polyprenyl-3-methyl-6-methoxy-1,4-benzoquinol (DMQH2). This Escherichia coli O9:H4 (strain HS) protein is Ubiquinone/menaquinone biosynthesis C-methyltransferase UbiE.